The sequence spans 434 residues: [Pyruvate dehydrogenase (acetyl-transferring)] kinase isozyme 1, mitochondrial (434 aa).

A mitochondrion-targeting transit peptide spans 1 to 26; that stretch reads MRLARLLRGGTSVRPLCAVPCASRSL. Phosphotyrosine; by FGFR1 is present on Tyr-136. The Histidine kinase domain occupies 161-391; sequence TEYKESFGVD…DAVIYIKALS (231 aa). At Tyr-241 the chain carries Phosphotyrosine; by FGFR1, ABL1, FLT3 and JAK2. The residue at position 242 (Tyr-242) is a Phosphotyrosine; by FGFR1. ATP contacts are provided by residues 277–284, Asp-316, 335–336, and 352–357; these read ELFKNAMR, ST, and GFGYGL. Phosphothreonine is present on Thr-336. Lys-403 bears the N6-succinyllysine mark.

This sequence belongs to the PDK/BCKDK protein kinase family. Homodimer, and heterodimer with PDK2. Interacts with the pyruvate dehydrogenase complex subunit DLAT, and is part of the multimeric pyruvate dehydrogenase complex that contains multiple copies of pyruvate dehydrogenase (E1), dihydrolipoamide acetyltransferase (DLAT, E2) and lipoamide dehydrogenase (DLD, E3). Interacts with phosphoglycerate kinase PGK1; the interaction is direct, occurs under hypoxic conditions and leads to PDK1-mediated inhibition of pyruvate dehydrogenase complex activity. Post-translationally, phosphorylated by constitutively activated ABL1, FGFR1, FLT3 and JAK2 (in vitro), and this may also occur in cancer cells that express constitutively activated ABL1, FGFR1, FLT3 and JAK2. Phosphorylation at Tyr-241 and Tyr-242 strongly increases kinase activity, while phosphorylation at Tyr-136 has a lesser effect. Phosphorylated under hypoxic conditions at Thr-336 by phosphoglycerate kinase PGK1 which has an activating effect. As to expression, detected in pancreas islets (at protein level). Expressed predominantly in the heart.

Its subcellular location is the mitochondrion matrix. It catalyses the reaction L-seryl-[pyruvate dehydrogenase E1 alpha subunit] + ATP = O-phospho-L-seryl-[pyruvate dehydrogenase E1 alpha subunit] + ADP + H(+). Its activity is regulated as follows. Activated by binding to the pyruvate dehydrogenase complex subunit DLAT. Strongly activated by NADH plus acetyl-coenzyme A. Inhibited by dichloroacetate. In terms of biological role, kinase that plays a key role in regulation of glucose and fatty acid metabolism and homeostasis via phosphorylation of the pyruvate dehydrogenase subunits PDHA1 and PDHA2. This inhibits pyruvate dehydrogenase activity, and thereby regulates metabolite flux through the tricarboxylic acid cycle, down-regulates aerobic respiration and inhibits the formation of acetyl-coenzyme A from pyruvate. Plays an important role in cellular responses to hypoxia and is important for cell proliferation under hypoxia. This chain is [Pyruvate dehydrogenase (acetyl-transferring)] kinase isozyme 1, mitochondrial (Pdk1), found in Rattus norvegicus (Rat).